The primary structure comprises 339 residues: Nicotinate-nucleotide--dimethylbenzimidazole phosphoribosyltransferase (339 aa).

The active-site Proton acceptor is the Glu306.

Belongs to the CobT family.

It catalyses the reaction 5,6-dimethylbenzimidazole + nicotinate beta-D-ribonucleotide = alpha-ribazole 5'-phosphate + nicotinate + H(+). It participates in nucleoside biosynthesis; alpha-ribazole biosynthesis; alpha-ribazole from 5,6-dimethylbenzimidazole: step 1/2. Functionally, catalyzes the synthesis of alpha-ribazole-5'-phosphate from nicotinate mononucleotide (NAMN) and 5,6-dimethylbenzimidazole (DMB). The polypeptide is Nicotinate-nucleotide--dimethylbenzimidazole phosphoribosyltransferase (Brucella anthropi (strain ATCC 49188 / DSM 6882 / CCUG 24695 / JCM 21032 / LMG 3331 / NBRC 15819 / NCTC 12168 / Alc 37) (Ochrobactrum anthropi)).